A 185-amino-acid chain; its full sequence is MKQTTVGAEILEPYAEALMSLAQSNNLTGRFGEDVAFILDLLKTSPELQQVLANPFVKPESKKAILRQLVAPQVHDFVLKFLLLLVDRRRIFLLEPICKQFQALLRKLTNTVLAEVTSVVELTEPQRQAVIEKVKTMTGSQQVELETRLDPELIGGVIVKVGSQVLDSSIRGQLRRISNTLTSFT.

The protein belongs to the ATPase delta chain family. As to quaternary structure, F-type ATPases have 2 components, F(1) - the catalytic core - and F(0) - the membrane proton channel. F(1) has five subunits: alpha(3), beta(3), gamma(1), delta(1), epsilon(1). CF(0) has four main subunits: a(1), b(1), b'(1) and c(10-14). The alpha and beta chains form an alternating ring which encloses part of the gamma chain. F(1) is attached to F(0) by a central stalk formed by the gamma and epsilon chains, while a peripheral stalk is formed by the delta, b and b' chains.

The protein resides in the cellular thylakoid membrane. F(1)F(0) ATP synthase produces ATP from ADP in the presence of a proton or sodium gradient. F-type ATPases consist of two structural domains, F(1) containing the extramembraneous catalytic core and F(0) containing the membrane proton channel, linked together by a central stalk and a peripheral stalk. During catalysis, ATP synthesis in the catalytic domain of F(1) is coupled via a rotary mechanism of the central stalk subunits to proton translocation. Functionally, this protein is part of the stalk that links CF(0) to CF(1). It either transmits conformational changes from CF(0) to CF(1) or is implicated in proton conduction. This Cyanothece sp. (strain PCC 7425 / ATCC 29141) protein is ATP synthase subunit delta.